The chain runs to 947 residues: Translation initiation factor IF-2 (947 aa).

The tract at residues 69–353 is disordered; it reads RRRKEVPQEE…TPKPQKKTEV (285 aa). A compositionally biased stretch (low complexity) spans 81 to 108; it reads APPAAAEEPSSVDTAVAEEAPAEEVQPV. Residues 139 to 155 show a composition bias toward acidic residues; sequence PVVEEVIAEPAVEEVVE. Composition is skewed to basic and acidic residues over residues 215-226 and 246-262; these read VTKEKPKVEKAT and KRQERAKNGKGRPERPK. Positions 264–284 are enriched in low complexity; it reads AKPSGGPAPRAKEAAPQAAVP. Residues 327 to 337 show a composition bias toward basic and acidic residues; sequence QVYEPERDERR. The span at 338–348 shows a compositional bias: basic residues; the sequence is MRRGKKTPKPQ. The 170-residue stretch at 447–616 folds into the tr-type G domain; sequence PRPPVVTIMG…LLQAEVLELK (170 aa). A G1 region spans residues 456–463; that stretch reads GHVDHGKT. 456 to 463 contributes to the GTP binding site; the sequence is GHVDHGKT. The G2 stretch occupies residues 481–485; sequence GITQH. Residues 502 to 505 are G3; sequence DTPG. Residues 502–506 and 556–559 contribute to the GTP site; these read DTPGH and NKMD. Residues 556–559 are G4; sequence NKMD. A G5 region spans residues 592 to 594; that stretch reads SAK.

Belongs to the TRAFAC class translation factor GTPase superfamily. Classic translation factor GTPase family. IF-2 subfamily.

The protein resides in the cytoplasm. Functionally, one of the essential components for the initiation of protein synthesis. Protects formylmethionyl-tRNA from spontaneous hydrolysis and promotes its binding to the 30S ribosomal subunits. Also involved in the hydrolysis of GTP during the formation of the 70S ribosomal complex. This Syntrophotalea carbinolica (strain DSM 2380 / NBRC 103641 / GraBd1) (Pelobacter carbinolicus) protein is Translation initiation factor IF-2.